The chain runs to 297 residues: Cell division protein ZipA (297 aa).

Methionine 1 is a topological domain (periplasmic). The chain crosses the membrane as a helical span at residues 2-22 (EIGLREWLILIGIIVIAGILF). Residues 23–297 (DGWRRMRGGK…FERRALTQKR (275 aa)) are Cytoplasmic-facing. The segment at 48–151 (DEEGGSAEVL…AAPASNSVKE (104 aa)) is disordered. Basic and acidic residues predominate over residues 83-92 (ARDREREPKP). A compositionally biased stretch (acidic residues) spans 124–133 (LFSDSDDDFA).

The protein belongs to the ZipA family. As to quaternary structure, interacts with FtsZ via their C-terminal domains.

The protein resides in the cell inner membrane. Essential cell division protein that stabilizes the FtsZ protofilaments by cross-linking them and that serves as a cytoplasmic membrane anchor for the Z ring. Also required for the recruitment to the septal ring of downstream cell division proteins. This Pseudomonas putida (strain ATCC 47054 / DSM 6125 / CFBP 8728 / NCIMB 11950 / KT2440) protein is Cell division protein ZipA.